Consider the following 784-residue polypeptide: Cyclin-dependent kinase 11B (784 aa).

The segment covering 18–60 (QEKKRRKEQEEKAEIKRLKNSDDRDSKRDSLEEGELRDHRMEI) has biased composition (basic and acidic residues). The interval 18-401 (QEKKRRKEQE…EGDYVPDSPA (384 aa)) is disordered. Phosphoserine is present on residues Ser-47 and Ser-72. A compositionally biased stretch (basic residues) spans 95–113 (EKAHHRKDEKRKEKRRHRS). 3 stretches are compositionally biased toward basic and acidic residues: residues 114–131 (HSAE…EREH), 138–227 (REEQ…DKGK), and 238–263 (PPRE…RDLL). Position 115 is a phosphoserine (Ser-115). Ser-270 is modified (phosphoserine). Residues 278–289 (SAESSSAESGSG) show a composition bias toward low complexity. 2 stretches are compositionally biased toward acidic residues: residues 290-353 (SEEE…EDRE) and 372-381 (DSEEGEEEVG). Residues 427–712 (FQCLNRIEEG…AEDGLKHEYF (286 aa)) enclose the Protein kinase domain. Residues 433 to 441 (IEEGTYGVV) and Lys-456 contribute to the ATP site. Ser-471 bears the Phosphoserine; by CDK7 mark. The residue at position 477 (Thr-477) is a Phosphothreonine; by CDK7. The Proton acceptor role is filled by Asp-551. The residue at position 578 (Ser-578) is a Phosphoserine. Phosphotyrosine is present on Tyr-583. Thr-584 is subject to Phosphothreonine. Lys-630 participates in a covalent cross-link: Glycyl lysine isopeptide (Lys-Gly) (interchain with G-Cter in SUMO2). A disordered region spans residues 722–784 (SMFPTWPAKS…AAGPGFSLKF (63 aa)). The residue at position 740 (Thr-740) is a Phosphothreonine. Phosphoserine is present on Ser-741.

The protein belongs to the protein kinase superfamily. CMGC Ser/Thr protein kinase family. CDC2/CDKX subfamily. May interact PAK1 and RANBP9. p110C interacts with RNPS1. Interacts with CCND3. Interacts with CCNL1 and CCNL2. Forms complexes with pre-mRNA-splicing factors, including at least SRSF1, SRSF2 AND SRSF7/SLU7. Requires Mg(2+) as cofactor. Phosphorylation at Ser-115 creates a binding site for 14-3-3 proteins.

The catalysed reaction is L-seryl-[protein] + ATP = O-phospho-L-seryl-[protein] + ADP + H(+). The enzyme catalyses L-threonyl-[protein] + ATP = O-phospho-L-threonyl-[protein] + ADP + H(+). With respect to regulation, phosphorylation at Thr-437 or Tyr-438 inactivates the enzyme, while phosphorylation at Thr-584 activates it. Plays multiple roles in cell cycle progression, cytokinesis and apoptosis. Involved in pre-mRNA splicing in a kinase activity-dependent manner. May act as a negative regulator of normal cell cycle progression. This chain is Cyclin-dependent kinase 11B (Cdk11b), found in Mus musculus (Mouse).